The chain runs to 596 residues: Putative terpene synthase 2, chloroplastic (596 aa).

Residues 1-46 constitute a chloroplast transit peptide; the sequence is MATLSMQVSTLSKQVKNLNTFGMGSASKLPMVARRVSTTRLRPICS. Mn(2+) is bound by residues Asp-349 and Asp-353. The short motif at 349-353 is the DDXXD motif element; sequence DDVYD. Homodimerization stretches follow at residues 355–361 and 427–464; these read YGTLDEL and EAKW…FTLP. Mn(2+) is bound by residues Asp-493 and Glu-501.

The protein belongs to the terpene synthase family. In terms of assembly, homodimer. Requires Mn(2+) as cofactor. Mg(2+) serves as cofactor.

The protein localises to the plastid. It is found in the chloroplast. It participates in secondary metabolite biosynthesis; terpenoid biosynthesis. Its function is as follows. Putative monoterpene synthase inactive on geranyl diphosphate (GPP). The polypeptide is Putative terpene synthase 2, chloroplastic (Thymus vulgaris (Thyme)).